The primary structure comprises 649 residues: Vitamin K-dependent protein S (649 aa).

The propeptide occupies 1 to 14 (SKQQASQVLVRKRR). One can recognise a Gla domain in the interval 15–60 (ANSMLEETKQGNLERECIEELCNKEEAREVFENDPETDYFYPKYLV). 4-carboxyglutamate occurs at positions 20, 21, 28, 30, 33, 34, 39, 40, 43, 46, and 50. Cysteines 31 and 36 form a disulfide. Residues 61-89 (CLRSFQSGLFTAARQSTDAYPDLRSCVNA) are thrombin-sensitive. One can recognise an EGF-like 1 domain in the interval 90–128 (IPDQCSPLPCNEDGYMSCKDGKASFTCTCKPGWQGERCE). Cystine bridges form between Cys94-Cys107, Cys99-Cys116, Cys118-Cys127, Cys134-Cys148, Cys144-Cys157, Cys159-Cys172, Cys178-Cys190, Cys185-Cys199, Cys201-Cys214, Cys220-Cys229, Cys225-Cys238, Cys240-Cys255, and Cys422-Cys448. Asp109 is subject to (3R)-3-hydroxyaspartate. Residues 130–173 (DINECKDPSNINGGCSQICDNTPGSYHCSCKSGFVMLSNKKDCK) enclose the EGF-like 2; calcium-binding domain. The EGF-like 3; calcium-binding domain maps to 174–215 (DVDECSLKPNMCGTAVCKNIPGDFECECPEGYRYNLKSKSCE). An EGF-like 4; calcium-binding domain is found at 216–256 (DVDECSENMCAQLCVNYPGGYTCYCDGKKGFKLAQDQKSCE). 2 Laminin G-like domains span residues 272–448 (LLYL…NKHC) and 457–639 (YYPG…AHSC). N-linked (GlcNAc...) asparagine glycosylation is found at Asn472, Asn482, and Asn503. Cys612 and Cys639 form a disulfide bridge.

The iron and 2-oxoglutarate dependent 3-hydroxylation of aspartate and asparagine is (R) stereospecific within EGF domains. As to expression, plasma.

The protein localises to the secreted. Its function is as follows. Anticoagulant plasma protein; it is a cofactor to activated protein C in the degradation of coagulation factors Va and VIIIa. It helps to prevent coagulation and stimulating fibrinolysis. This is Vitamin K-dependent protein S (PROS1) from Macaca mulatta (Rhesus macaque).